Consider the following 131-residue polypeptide: MSKKQNSSISRKKIKRQILEGIAHIHASFNNTIVTITDRQGNTLGWATSGGSGFRGSRKSTPFAAQVAAEKCSEIAKEYGIKNLEIMVKGPGPGRESTIRALNSSGFKITNITDVTPIPHNGCRPPKRRRV.

This sequence belongs to the universal ribosomal protein uS11 family. As to quaternary structure, part of the 30S ribosomal subunit. Interacts with proteins S7 and S18. Binds to IF-3.

Functionally, located on the platform of the 30S subunit, it bridges several disparate RNA helices of the 16S rRNA. Forms part of the Shine-Dalgarno cleft in the 70S ribosome. This chain is Small ribosomal subunit protein uS11, found in Wigglesworthia glossinidia brevipalpis.